Reading from the N-terminus, the 678-residue chain is Elongation factor G 2 (678 aa).

Residues 4-278 enclose the tr-type G domain; it reads QKLRNIGIIA…AVVDYLPSPQ (275 aa). Residues 13–20, 77–81, and 131–134 each bind GTP; these read AHVDAGKT, DTPGH, and NKMD.

It belongs to the TRAFAC class translation factor GTPase superfamily. Classic translation factor GTPase family. EF-G/EF-2 subfamily.

The protein localises to the cytoplasm. Functionally, catalyzes the GTP-dependent ribosomal translocation step during translation elongation. During this step, the ribosome changes from the pre-translocational (PRE) to the post-translocational (POST) state as the newly formed A-site-bound peptidyl-tRNA and P-site-bound deacylated tRNA move to the P and E sites, respectively. Catalyzes the coordinated movement of the two tRNA molecules, the mRNA and conformational changes in the ribosome. In Hahella chejuensis (strain KCTC 2396), this protein is Elongation factor G 2.